A 1121-amino-acid polypeptide reads, in one-letter code: Pleckstrin homology domain-containing family A member 7 (1121 aa).

WW domains lie at D9 to T42 and S54 to T87. The interval P105–G137 is disordered. Polar residues predominate over residues R115–T131. Positions P164–Q282 constitute a PH domain. The disordered stretch occupies residues Q299–A514. Basic and acidic residues-rich tracts occupy residues E308–R356 and H437–S446. Residues P460–K475 are compositionally biased toward polar residues. The segment covering Y497–A514 has biased composition (basic and acidic residues). Phosphoserine is present on residues S536, S545, S569, S604, S608, and S612. The interval T538–S696 is interaction with CTNND1. The segment at E547–M632 is disordered. Over residues P567 to F582 the composition is skewed to pro residues. The span at T589–V605 shows a compositional bias: basic and acidic residues. Residues E700 to F801 are a coiled coil. 2 disordered regions span residues R841–P876 and Y888–Q971. 3 positions are modified to phosphoserine: S858, S860, and S867. Over residues K861 to S871 the composition is skewed to pro residues. T870 carries the phosphothreonine modification. A phosphoserine mark is found at S871, S903, and S907. Pro residues predominate over residues D933–P942. Positions R958 to L969 are enriched in basic and acidic residues. Residue S986 is modified to Phosphoserine. Disordered stretches follow at residues G1003 to Q1028 and R1082 to C1121. The stretch at Q1067 to T1094 forms a coiled coil. The segment covering R1082–T1094 has biased composition (basic residues).

Interacts with CAMSAP3 and CTNND1. Interacts (via WW domains) with TSPAN33 (via cytoplasmic domain) and with PDZD11; the interaction with TSPAN33 is dependent on PDZD11 being bound to PLEKHA7 and facilitates the docking of ADAM10 to zonula adherens through interaction of TSPAN33 with ADAM10.

It localises to the cell junction. It is found in the adherens junction. Its subcellular location is the cytoplasm. The protein localises to the cytoskeleton. The protein resides in the microtubule organizing center. It localises to the centrosome. In terms of biological role, required for zonula adherens biogenesis and maintenance. Acts via its interaction with CAMSAP3, which anchors microtubules at their minus-ends to zonula adherens, leading to the recruitment of KIFC3 kinesin to the junctional site. Mediates docking of ADAM10 to zonula adherens through a PDZD11-dependent interaction with the ADAM10-binding protein TSPAN33. The chain is Pleckstrin homology domain-containing family A member 7 (PLEKHA7) from Homo sapiens (Human).